A 310-amino-acid polypeptide reads, in one-letter code: Methionyl-tRNA formyltransferase (310 aa).

111–114 (SLLP) serves as a coordination point for (6S)-5,6,7,8-tetrahydrofolate.

It belongs to the Fmt family.

The enzyme catalyses L-methionyl-tRNA(fMet) + (6R)-10-formyltetrahydrofolate = N-formyl-L-methionyl-tRNA(fMet) + (6S)-5,6,7,8-tetrahydrofolate + H(+). Attaches a formyl group to the free amino group of methionyl-tRNA(fMet). The formyl group appears to play a dual role in the initiator identity of N-formylmethionyl-tRNA by promoting its recognition by IF2 and preventing the misappropriation of this tRNA by the elongation apparatus. The sequence is that of Methionyl-tRNA formyltransferase from Rhodopseudomonas palustris (strain ATCC BAA-98 / CGA009).